Here is a 119-residue protein sequence, read N- to C-terminus: Protein TusC (119 aa).

Belongs to the DsrF/TusC family. In terms of assembly, heterohexamer, formed by a dimer of trimers. The hexameric TusBCD complex contains 2 copies each of TusB, TusC and TusD. The TusBCD complex interacts with TusE.

It localises to the cytoplasm. Its function is as follows. Part of a sulfur-relay system required for 2-thiolation of 5-methylaminomethyl-2-thiouridine (mnm(5)s(2)U) at tRNA wobble positions. The chain is Protein TusC from Buchnera aphidicola subsp. Acyrthosiphon pisum (strain APS) (Acyrthosiphon pisum symbiotic bacterium).